Here is a 40-residue protein sequence, read N- to C-terminus: Muscarinic m1-toxin4 (40 aa).

Cys3 and Cys24 are oxidised to a cystine.

The protein belongs to the three-finger toxin family. Short-chain subfamily. Aminergic toxin sub-subfamily. Monomer. Post-translationally, contains 4 disulfide bonds. As to expression, expressed by the venom gland.

It localises to the secreted. Functionally, binds irreversibly and specifically to M1 (CHRM1) muscarinic acetylcholine receptors, blocking further binding of antagonists and preventing the action of agonists. This Dendroaspis angusticeps (Eastern green mamba) protein is Muscarinic m1-toxin4.